A 250-amino-acid chain; its full sequence is Ribonuclease HII (250 aa).

The RNase H type-2 domain occupies 66–250 (QLVAGVDEVG…SFAPVSEYEK (185 aa)). Residues aspartate 72, glutamate 73, and aspartate 164 each coordinate a divalent metal cation.

It belongs to the RNase HII family. The cofactor is Mn(2+). Mg(2+) serves as cofactor.

Its subcellular location is the cytoplasm. It catalyses the reaction Endonucleolytic cleavage to 5'-phosphomonoester.. Its function is as follows. Endonuclease that specifically degrades the RNA of RNA-DNA hybrids. The protein is Ribonuclease HII of Lactobacillus gasseri (strain ATCC 33323 / DSM 20243 / BCRC 14619 / CIP 102991 / JCM 1131 / KCTC 3163 / NCIMB 11718 / NCTC 13722 / AM63).